The following is a 238-amino-acid chain: COMM domain-containing protein 10 homolog Vlet (238 aa).

Over residues 43 to 77 (ASASATSSTVGTSVTTTGRVDSSTEENPTSNTEPE) the composition is skewed to low complexity. The segment at 43–78 (ASASATSSTVGTSVTTTGRVDSSTEENPTSNTEPEY) is disordered. A COMM domain is found at 161-225 (VIEDVAWKLN…SIQGELDAML (65 aa)).

Belongs to the COMM domain-containing protein 10 family. As to quaternary structure, component of the commander complex consisting of the CCC subcomplex and the retriever subcomplex. Component of the CCC subcomplex. Interacts with Smn; along with Sbat and Hez may form an accessory subcomplex involved in SMN complex function.

Scaffold protein in the commander complex that is essential for endosomal recycling of transmembrane cargos; the commander complex is composed of the CCC subcomplex and the retriever subcomplex. May modulate activity of cullin-RING E3 ubiquitin ligase (CRL) complexes. May down-regulate activation of NF-kappa-B. May have an accessory function in the survival motor neuron (SMN) complex. Required for neuromuscular function and organismal viability. The chain is COMM domain-containing protein 10 homolog Vlet from Drosophila melanogaster (Fruit fly).